A 214-amino-acid chain; its full sequence is Dephospho-CoA kinase (214 aa).

A DPCK domain is found at 3–202; the sequence is KIGLTGGIGS…DRWLALAGAA (200 aa). An ATP-binding site is contributed by 11–16; it reads GSGKSR.

It belongs to the CoaE family.

It is found in the cytoplasm. The catalysed reaction is 3'-dephospho-CoA + ATP = ADP + CoA + H(+). It participates in cofactor biosynthesis; coenzyme A biosynthesis; CoA from (R)-pantothenate: step 5/5. Functionally, catalyzes the phosphorylation of the 3'-hydroxyl group of dephosphocoenzyme A to form coenzyme A. The polypeptide is Dephospho-CoA kinase (Bordetella pertussis (strain Tohama I / ATCC BAA-589 / NCTC 13251)).